The following is a 778-amino-acid chain: Dynein axonemal intermediate chain 4 (778 aa).

WD repeat units lie at residues 477–517 (HCES…QTPI), 526–573 (LHTS…ECVD), 586–629 (RHIS…QYLE), 633–673 (AHKR…PVMG), 676–715 (SGQR…LDPT), and 721–760 (SPGV…AGGG).

As to quaternary structure, part of the multisubunit axonemal dynein complex formed at least of two heavy chains and a number of intermediate and light chains.

The protein resides in the cytoplasm. It is found in the cytoskeleton. The protein localises to the flagellum axoneme. Its subcellular location is the cilium axoneme. It localises to the dynein axonemal particle. In terms of biological role, plays a critical role in the assembly of axonemal dynein complex. Plays a key role in ciliary motility. The polypeptide is Dynein axonemal intermediate chain 4 (Danio rerio (Zebrafish)).